The sequence spans 599 residues: MSQTAYRTHHATEVTEALVGQKVTLAGWVDRRRDHGGVAFIDLRDSTGLVQVVIYDEDMARPLRSEFVIQITGEVRLRPDGNENTHLATGKIEVVAETIEILAKSDALPFQVSTALENESENKLPGEDVRLKYRYLDLRRPSMQYNLKLRSDMAKAARHALEDMDFTEVETPTFIKSTPEGARDFVVPARLVPGSWYALPQSPQLLKQLLMVSGVERYYQLARCYRDEDFRADRQPEFTQLDMEMAYVDQEDVMAMTEKVIAAIWKSAGYEVQLPLPRITWKDAMDKYGSDKPDLRFGNPLVELTEYFKNTPFRVFQAPYVGAVVFKGGAATPRRQFDAWQDWARQRGAKGLAYVVFGENGELKGPVAKNLSDEERNGLREAVGAEEGDAVFFAAGSRESAQLLLGAVRVELASREGLLDPKKFAFTWVVDFPLFKPTDDPDDDDVAVGHSKWTSMHHPFTMPSKDWIDKFDKDPEHAMSDSYDIVCNGEEMGGGSVRIHRDDIQARVLDVLGITKEEADEKFGFLLEAFKYGAPPHAGLALGWDRTVSILAGADSIRDVIAFPKAGGGRDPLTGAPAPISDEQRAETGVDYDPDADEN.

Residue Glu180 participates in L-aspartate binding. The tract at residues Gln204–Lys207 is aspartate. Residue Arg226 coordinates L-aspartate. Residues Arg226–Glu228 and Gln235 contribute to the ATP site. His457 serves as a coordination point for L-aspartate. Residue Glu491 coordinates ATP. Arg498 is an L-aspartate binding site. Gly543 to Arg546 serves as a coordination point for ATP. The interval Lys565–Asn599 is disordered. Residues Val590–Asn599 are compositionally biased toward acidic residues.

Belongs to the class-II aminoacyl-tRNA synthetase family. Type 1 subfamily. Homodimer.

Its subcellular location is the cytoplasm. It carries out the reaction tRNA(Asx) + L-aspartate + ATP = L-aspartyl-tRNA(Asx) + AMP + diphosphate. In terms of biological role, aspartyl-tRNA synthetase with relaxed tRNA specificity since it is able to aspartylate not only its cognate tRNA(Asp) but also tRNA(Asn). Reaction proceeds in two steps: L-aspartate is first activated by ATP to form Asp-AMP and then transferred to the acceptor end of tRNA(Asp/Asn). The protein is Aspartate--tRNA(Asp/Asn) ligase of Bifidobacterium longum (strain NCC 2705).